A 545-amino-acid chain; its full sequence is Glucose-6-phosphate isomerase (545 aa).

The Proton donor role is filled by E351. Catalysis depends on residues H382 and K510.

It belongs to the GPI family.

Its subcellular location is the cytoplasm. It carries out the reaction alpha-D-glucose 6-phosphate = beta-D-fructose 6-phosphate. It functions in the pathway carbohydrate biosynthesis; gluconeogenesis. It participates in carbohydrate degradation; glycolysis; D-glyceraldehyde 3-phosphate and glycerone phosphate from D-glucose: step 2/4. Functionally, catalyzes the reversible isomerization of glucose-6-phosphate to fructose-6-phosphate. The sequence is that of Glucose-6-phosphate isomerase from Shewanella denitrificans (strain OS217 / ATCC BAA-1090 / DSM 15013).